The chain runs to 595 residues: Phenylalanine--tRNA ligase beta subunit (595 aa).

The tract at residues 86-90 (KLSKP) is 3'-CCA residue in tRNA. Positions 292–370 (FNDRIMDVSI…VGYGFNNLPK (79 aa)) constitute a B5 domain. 4 residues coordinate Mg(2+): Asp348, Asp354, Glu357, and Asp358.

This sequence belongs to the phenylalanyl-tRNA synthetase beta subunit family. Type 2 subfamily. As to quaternary structure, tetramer of two alpha and two beta subunits. Requires Mg(2+) as cofactor.

It localises to the cytoplasm. It catalyses the reaction tRNA(Phe) + L-phenylalanine + ATP = L-phenylalanyl-tRNA(Phe) + AMP + diphosphate + H(+). The polypeptide is Phenylalanine--tRNA ligase beta subunit (FRS1) (Saccharomyces cerevisiae (strain ATCC 204508 / S288c) (Baker's yeast)).